The following is a 232-amino-acid chain: Small ribosomal subunit protein uS2 (232 aa).

Belongs to the universal ribosomal protein uS2 family.

In Baumannia cicadellinicola subsp. Homalodisca coagulata, this protein is Small ribosomal subunit protein uS2.